The chain runs to 199 residues: uncharacterized protein (199 aa).

Residues 1–41 (MKFKRDENQNSTHHRGNKNNTNNDDDDKEEEEEIINDTTMP) are disordered. The segment covering 23–35 (NDDDDKEEEEEII) has biased composition (acidic residues). 3 helical membrane passes run 73-93 (LILD…FAFW), 96-116 (ISTY…VSFL), and 166-186 (IAIA…SPYL).

It is found in the membrane. This is an uncharacterized protein from Dictyostelium discoideum (Social amoeba).